The following is a 487-amino-acid chain: Malonate-semialdehyde dehydrogenase 2 (487 aa).

Positions 154, 178, 181, 182, and 231 each coordinate NAD(+). Cysteine 286 (nucleophile) is an active-site residue. Residue glutamate 386 participates in NAD(+) binding.

It belongs to the aldehyde dehydrogenase family. IolA subfamily. As to quaternary structure, homotetramer.

The enzyme catalyses 3-oxopropanoate + NAD(+) + CoA + H2O = hydrogencarbonate + acetyl-CoA + NADH + H(+). It carries out the reaction 2-methyl-3-oxopropanoate + NAD(+) + CoA + H2O = propanoyl-CoA + hydrogencarbonate + NADH + H(+). It functions in the pathway polyol metabolism; myo-inositol degradation into acetyl-CoA; acetyl-CoA from myo-inositol: step 7/7. In terms of biological role, catalyzes the oxidation of malonate semialdehyde (MSA) and methylmalonate semialdehyde (MMSA) into acetyl-CoA and propanoyl-CoA, respectively. Is involved in a myo-inositol catabolic pathway. Bicarbonate, and not CO2, is the end-product of the enzymatic reaction. The chain is Malonate-semialdehyde dehydrogenase 2 from Bacillus anthracis.